A 90-amino-acid polypeptide reads, in one-letter code: DNA-directed RNA polymerase subunit omega (90 aa).

Belongs to the RNA polymerase subunit omega family. In terms of assembly, the RNAP catalytic core consists of 2 alpha, 1 beta, 1 beta' and 1 omega subunit. When a sigma factor is associated with the core the holoenzyme is formed, which can initiate transcription.

It carries out the reaction RNA(n) + a ribonucleoside 5'-triphosphate = RNA(n+1) + diphosphate. Functionally, promotes RNA polymerase assembly. Latches the N- and C-terminal regions of the beta' subunit thereby facilitating its interaction with the beta and alpha subunits. The polypeptide is DNA-directed RNA polymerase subunit omega (Saccharophagus degradans (strain 2-40 / ATCC 43961 / DSM 17024)).